The following is a 369-amino-acid chain: Queuine tRNA-ribosyltransferase (369 aa).

D89 serves as the catalytic Proton acceptor. Substrate contacts are provided by residues 89 to 93, D142, Q184, and G211; that span reads DSGGF. An RNA binding region spans residues 242–248; sequence GGGSPEL. D261 serves as the catalytic Nucleophile. The tract at residues 266–270 is RNA binding; important for wobble base 34 recognition; the sequence is TRIAR. C299, C301, C304, and H330 together coordinate Zn(2+).

The protein belongs to the queuine tRNA-ribosyltransferase family. In terms of assembly, homodimer. Within each dimer, one monomer is responsible for RNA recognition and catalysis, while the other monomer binds to the replacement base PreQ1. Zn(2+) serves as cofactor.

It carries out the reaction 7-aminomethyl-7-carbaguanine + guanosine(34) in tRNA = 7-aminomethyl-7-carbaguanosine(34) in tRNA + guanine. Its pathway is tRNA modification; tRNA-queuosine biosynthesis. In terms of biological role, catalyzes the base-exchange of a guanine (G) residue with the queuine precursor 7-aminomethyl-7-deazaguanine (PreQ1) at position 34 (anticodon wobble position) in tRNAs with GU(N) anticodons (tRNA-Asp, -Asn, -His and -Tyr). Catalysis occurs through a double-displacement mechanism. The nucleophile active site attacks the C1' of nucleotide 34 to detach the guanine base from the RNA, forming a covalent enzyme-RNA intermediate. The proton acceptor active site deprotonates the incoming PreQ1, allowing a nucleophilic attack on the C1' of the ribose to form the product. After dissociation, two additional enzymatic reactions on the tRNA convert PreQ1 to queuine (Q), resulting in the hypermodified nucleoside queuosine (7-(((4,5-cis-dihydroxy-2-cyclopenten-1-yl)amino)methyl)-7-deazaguanosine). The polypeptide is Queuine tRNA-ribosyltransferase (Thermotoga maritima (strain ATCC 43589 / DSM 3109 / JCM 10099 / NBRC 100826 / MSB8)).